A 943-amino-acid chain; its full sequence is Zinc finger BED domain-containing protein 39 (943 aa).

A disordered region spans residues 1–99 (MSSVSSDIDG…DIAMDVSGST (99 aa)). The segment covering 12–21 (PETKRFRIDV) has biased composition (basic and acidic residues). Residues 50-72 (SPAAPSSASYRSSNSSVISSSES) show a composition bias toward low complexity. A compositionally biased stretch (basic and acidic residues) spans 73–85 (PIKDEDVDVHDGQ). The BED-type; degenerate zinc finger occupies 184-235 (NKQTPVWKYFVYNKTENLSRCIVGDCTYMLKGPHTSTLACHLKKHTREYSEF). Disordered regions lie at residues 242-315 (YSRT…KEPS) and 328-348 (RQAT…PQLP). Polar residues predominate over residues 262–276 (TLQTQNTPRQTGSPA). Residues 277–292 (STCNTNSNTSSSVSSG) are compositionally biased toward low complexity. Over residues 328–338 (RQATNNSNGSP) the composition is skewed to polar residues.

In terms of tissue distribution, expressed in distal tip cells and in germline cells.

Its subcellular location is the nucleus. It localises to the cytoplasm. Its function is as follows. Regulates the timing and orientation of distal tip cell migration during gonadal development. May act in parallel to cacn-1 and Rac GTPases to control the anterior and posterior migration of distal tip cells. The protein is Zinc finger BED domain-containing protein 39 of Caenorhabditis elegans.